The chain runs to 91 residues: Small ribosomal subunit protein bS20 (91 aa).

The disordered stretch occupies residues methionine 1 to leucine 28. The span at alanine 7 to serine 23 shows a compositional bias: basic residues.

This sequence belongs to the bacterial ribosomal protein bS20 family.

Binds directly to 16S ribosomal RNA. This chain is Small ribosomal subunit protein bS20, found in Brevibacillus brevis (strain 47 / JCM 6285 / NBRC 100599).